A 125-amino-acid chain; its full sequence is Protein ApaG (125 aa).

Positions 3–125 (TAVTEGIEVT…FPLVVPGTLN (123 aa)) constitute an ApaG domain.

The polypeptide is Protein ApaG (Anaeromyxobacter sp. (strain K)).